The following is a 546-amino-acid chain: Chaperonin GroEL (546 aa).

ATP-binding positions include 29–32, lysine 50, 86–90, glycine 414, 477–479, and aspartate 493; these read TLGP, DGTTT, and NAA.

It belongs to the chaperonin (HSP60) family. In terms of assembly, forms a cylinder of 14 subunits composed of two heptameric rings stacked back-to-back. Interacts with the co-chaperonin GroES.

The protein localises to the cytoplasm. It carries out the reaction ATP + H2O + a folded polypeptide = ADP + phosphate + an unfolded polypeptide.. Together with its co-chaperonin GroES, plays an essential role in assisting protein folding. The GroEL-GroES system forms a nano-cage that allows encapsulation of the non-native substrate proteins and provides a physical environment optimized to promote and accelerate protein folding. The chain is Chaperonin GroEL from Geobacter metallireducens (strain ATCC 53774 / DSM 7210 / GS-15).